A 373-amino-acid chain; its full sequence is DNA replication and repair protein RecF (373 aa).

30 to 37 (GENAQGKT) lines the ATP pocket.

It belongs to the RecF family.

Its subcellular location is the cytoplasm. In terms of biological role, the RecF protein is involved in DNA metabolism; it is required for DNA replication and normal SOS inducibility. RecF binds preferentially to single-stranded, linear DNA. It also seems to bind ATP. The chain is DNA replication and repair protein RecF from Limosilactobacillus fermentum (strain NBRC 3956 / LMG 18251) (Lactobacillus fermentum).